Consider the following 219-residue polypeptide: 7-cyano-7-deazaguanine synthase (219 aa).

10-20 serves as a coordination point for ATP; the sequence is FSGGQDSTTCL. Residues C188, C197, C200, and C203 each coordinate Zn(2+).

It belongs to the QueC family. Zn(2+) is required as a cofactor.

The catalysed reaction is 7-carboxy-7-deazaguanine + NH4(+) + ATP = 7-cyano-7-deazaguanine + ADP + phosphate + H2O + H(+). It participates in purine metabolism; 7-cyano-7-deazaguanine biosynthesis. Functionally, catalyzes the ATP-dependent conversion of 7-carboxy-7-deazaguanine (CDG) to 7-cyano-7-deazaguanine (preQ(0)). This chain is 7-cyano-7-deazaguanine synthase, found in Bacteroides fragilis (strain ATCC 25285 / DSM 2151 / CCUG 4856 / JCM 11019 / LMG 10263 / NCTC 9343 / Onslow / VPI 2553 / EN-2).